A 183-amino-acid chain; its full sequence is Ferritin heavy chain (183 aa).

Residue M1 is modified to N-acetylmethionine. T2 bears the N-acetylthreonine; in Ferritin heavy chain, N-terminally processed mark. One can recognise a Ferritin-like diiron domain in the interval 11-160; the sequence is QNYHQDSEAA…DHVTNLRKMG (150 aa). Fe cation is bound by residues E28, E63, H66, E108, and Q142. Phosphoserine occurs at positions 179 and 183.

The protein belongs to the ferritin family. Oligomer of 24 subunits. There are two types of subunits: L (light) chain and H (heavy) chain. The major chain can be light or heavy, depending on the species and tissue type. In the human liver, the heavy chain is predominant. The functional molecule forms a roughly spherical shell with a diameter of 12 nm and contains a central cavity into which the insoluble mineral iron core is deposited. Interacts with NCOA4; NCOA4 promotes targeting of the iron-binding ferritin complex to autolysosomes following starvation or iron depletion. Expressed in the liver.

Its subcellular location is the cytoplasm. The protein resides in the lysosome. It is found in the cytoplasmic vesicle. It localises to the autophagosome. The enzyme catalyses 4 Fe(2+) + O2 + 4 H(+) = 4 Fe(3+) + 2 H2O. In terms of biological role, stores iron in a soluble, non-toxic, readily available form. Important for iron homeostasis. Has ferroxidase activity. Iron is taken up in the ferrous form and deposited as ferric hydroxides after oxidation. Also plays a role in delivery of iron to cells. Mediates iron uptake in capsule cells of the developing kidney. Delivery to lysosomes is mediated by the cargo receptor NCOA4 for autophagic degradation and release of iron. The protein is Ferritin heavy chain (FTH1) of Homo sapiens (Human).